The chain runs to 374 residues: Chaperone protein DnaJ (374 aa).

One can recognise a J domain in the interval 5 to 70; it reads DFYEILGVSK…EKRSAYDRMG (66 aa). Residues 133-211 form a CR-type zinc finger; sequence GCKKEISFTA…CHGNGVKDKS (79 aa). Zn(2+) contacts are provided by cysteine 146, cysteine 149, cysteine 163, cysteine 166, cysteine 185, cysteine 188, cysteine 199, and cysteine 202. 4 CXXCXGXG motif repeats span residues 146–153, 163–170, 185–192, and 199–206; these read CDTCDGKG, CQTCHGQG, CPHCGGTG, and CSDCHGNG.

Belongs to the DnaJ family. Homodimer. It depends on Zn(2+) as a cofactor.

The protein localises to the cytoplasm. In terms of biological role, participates actively in the response to hyperosmotic and heat shock by preventing the aggregation of stress-denatured proteins and by disaggregating proteins, also in an autonomous, DnaK-independent fashion. Unfolded proteins bind initially to DnaJ; upon interaction with the DnaJ-bound protein, DnaK hydrolyzes its bound ATP, resulting in the formation of a stable complex. GrpE releases ADP from DnaK; ATP binding to DnaK triggers the release of the substrate protein, thus completing the reaction cycle. Several rounds of ATP-dependent interactions between DnaJ, DnaK and GrpE are required for fully efficient folding. Also involved, together with DnaK and GrpE, in the DNA replication of plasmids through activation of initiation proteins. This chain is Chaperone protein DnaJ, found in Psychrobacter arcticus (strain DSM 17307 / VKM B-2377 / 273-4).